The primary structure comprises 324 residues: DNA primase small subunit PriS (324 aa).

Catalysis depends on residues Asp94, Asp96, and Asp274.

The protein belongs to the eukaryotic-type primase small subunit family. In terms of assembly, heterodimer of a small subunit (PriS) and a large subunit (PriL). Requires Mg(2+) as cofactor. Mn(2+) is required as a cofactor.

In terms of biological role, catalytic subunit of DNA primase, an RNA polymerase that catalyzes the synthesis of short RNA molecules used as primers for DNA polymerase during DNA replication. The small subunit contains the primase catalytic core and has DNA synthesis activity on its own. Binding to the large subunit stabilizes and modulates the activity, increasing the rate of DNA synthesis while decreasing the length of the DNA fragments, and conferring RNA synthesis capability. The DNA polymerase activity may enable DNA primase to also catalyze primer extension after primer synthesis. May also play a role in DNA repair. The chain is DNA primase small subunit PriS from Methanobrevibacter smithii (strain ATCC 35061 / DSM 861 / OCM 144 / PS).